We begin with the raw amino-acid sequence, 366 residues long: MVTCSMRCTEEHLLGAPAAFSSGKRKRDSGYSPGDATPGDRGEGGPDWPSAGIKKRVKYSRHRKQRLELRSCDSGVADLYETPSPSPVAPTPTNEPYDSPCTSMPDRLGLQSFSDYGHDCYLFNKSLEDKFLTVNCLKNQPQIKAESRCKLISWLIPVHKHLKLGFESLCLTVNILDRFLACTPVASDCFQLVGVTSLLIACKQVESRPPRVKQLLALCCDAFSREQLCNLECIILLKLCFRIGAPTINFFLQHFSLLRVTSVESPDTELIEATKSMTVARGIAELSLADYAFNAYSPSLVAACCLELADRMLCLRNPIGVRVSGYHQSLIKECVGKIDLLVSLNQDSLHRLLPSQFSVKSIKADN.

Disordered regions lie at residues A18–K55 and Y80–S99.

It belongs to the cyclin family.

Its subcellular location is the cytoplasm. Specifically required for generation of multiciliated cells, possibly by promoting a cell cycle state compatible with centriole amplification and maturation. Acts downstream of mcidas to promote mother centriole amplification and maturation in preparation for apical docking. The sequence is that of Cyclin-O protein A (ccno-a) from Xenopus laevis (African clawed frog).